Here is a 70-residue protein sequence, read N- to C-terminus: uncharacterized protein (70 aa).

Positions 5 to 59 (IREFRAKYGMTQEELAKKVGVRRETIVFLEKGKYNPSLRLAYKIARVFNARIEDL) constitute an HTH cro/C1-type domain. The segment at residues 16 to 35 (QEELAKKVGVRRETIVFLEK) is a DNA-binding region (H-T-H motif).

This is an uncharacterized protein from Archaeoglobus fulgidus (strain ATCC 49558 / DSM 4304 / JCM 9628 / NBRC 100126 / VC-16).